The primary structure comprises 780 residues: Ral guanine nucleotide dissociation stimulator-like 2 (780 aa).

The tract at residues 1–92 (MLPRPLRLLW…PTPPPRSSRR (92 aa)) is disordered. S13 carries the phosphoserine modification. A compositionally biased stretch (gly residues) spans 31 to 42 (GGGPGGRGVGGG). Residues 43–65 (QEEEEEEEEDEAPVSVWDEEEDG) are compositionally biased toward acidic residues. The N-terminal Ras-GEF domain maps to 89–213 (SSRRLRAGTL…GSADLIRNLR (125 aa)). Positions 244–516 (LADHLAEQLT…HRVSCEVEPP (273 aa)) constitute a Ras-GEF domain. Residues 596–613 (HSLADPSHLSPPASSPRP) are compositionally biased toward low complexity. Disordered stretches follow at residues 596–651 (HSLA…GASD) and 741–769 (TATL…PRIK). The 88-residue stretch at 651-738 (DCRIIRVQME…HDFLLRQRRR (88 aa)) folds into the Ras-associating domain. Residues 741 to 758 (TATLGLTSSPSASGTPPS) are compositionally biased toward low complexity.

In terms of assembly, interacts with SAMD9.

Functionally, probable guanine nucleotide exchange factor. Putative effector of Ras and/or Rap. Associates with the GTP-bound form of Rap 1A and H-Ras in vitro. The sequence is that of Ral guanine nucleotide dissociation stimulator-like 2 (RGL2) from Canis lupus familiaris (Dog).